A 912-amino-acid polypeptide reads, in one-letter code: Nonsense-mediated mRNA decay factor SMG8 (912 aa).

Positions Glu565–Gln630 are disordered. Polar residues predominate over residues Thr570–Phe602. A compositionally biased stretch (basic and acidic residues) spans Met604–Ser614.

Belongs to the SMG8 family.

Functionally, involved in nonsense-mediated decay (NMD) of mRNAs containing premature stop codons. Probable component of kinase complex containing SMG1 and recruited to stalled ribosomes. The sequence is that of Nonsense-mediated mRNA decay factor SMG8 from Culex quinquefasciatus (Southern house mosquito).